Consider the following 142-residue polypeptide: Large ribosomal subunit protein uL11 (142 aa).

The protein belongs to the universal ribosomal protein uL11 family. As to quaternary structure, part of the ribosomal stalk of the 50S ribosomal subunit. Interacts with L10 and the large rRNA to form the base of the stalk. L10 forms an elongated spine to which L12 dimers bind in a sequential fashion forming a multimeric L10(L12)X complex. In terms of processing, one or more lysine residues are methylated.

In terms of biological role, forms part of the ribosomal stalk which helps the ribosome interact with GTP-bound translation factors. In Yersinia pestis bv. Antiqua (strain Angola), this protein is Large ribosomal subunit protein uL11.